Here is a 132-residue protein sequence, read N- to C-terminus: Ragulator complex protein LAMTOR3 homolog (132 aa).

It belongs to the LAMTOR3 family. As to quaternary structure, part of the Ragulator complex.

Regulator of the TOR pathway, a signaling cascade that promotes cell growth in response to growth factors, energy levels, and amino acids. May activate the TOR signaling cascade in response to amino acids. This Dictyostelium discoideum (Social amoeba) protein is Ragulator complex protein LAMTOR3 homolog.